Here is a 345-residue protein sequence, read N- to C-terminus: Molybdate/tungstate import ATP-binding protein WtpC (345 aa).

In terms of domain architecture, ABC transporter spans 2-231 (LKVESISKDY…PKSEEVARFL (230 aa)). Residue 33–40 (GPSGSGKT) coordinates ATP. A Mop domain is found at 280–345 (KTSARNVFKA…FKASAIHVFP (66 aa)).

The protein belongs to the ABC transporter superfamily. Sulfate/tungstate importer (TC 3.A.1.6) family. The complex is composed of two ATP-binding proteins (WtpC), two transmembrane proteins (WtpB) and a solute-binding protein (WtpA).

It localises to the cell membrane. The enzyme catalyses tungstate(in) + ATP + H2O = tungstate(out) + ADP + phosphate + H(+). Part of the ABC transporter complex WtpABC involved in molybdate/tungstate import. Responsible for energy coupling to the transport system. In Pyrococcus horikoshii (strain ATCC 700860 / DSM 12428 / JCM 9974 / NBRC 100139 / OT-3), this protein is Molybdate/tungstate import ATP-binding protein WtpC (wtpC).